The sequence spans 46 residues: Escargot/snail protein homolog (46 aa).

3 C2H2-type zinc fingers span residues 1–4 (HIAH), 9–30 (CKCPICGKPFAPWLLQGHIRTH), and 36–46 (SVCQHCNRAFA).

Belongs to the snail C2H2-type zinc-finger protein family.

Its subcellular location is the nucleus. This is Escargot/snail protein homolog from Lithobius forficatus (Centipede).